Consider the following 218-residue polypeptide: Small ribosomal subunit protein uS3c (218 aa).

Residues 47–118 (VQKNIRISSG…KLNIAITRIS (72 aa)) enclose the KH type-2 domain.

The protein belongs to the universal ribosomal protein uS3 family. In terms of assembly, part of the 30S ribosomal subunit.

The protein localises to the plastid. Its subcellular location is the chloroplast. The chain is Small ribosomal subunit protein uS3c (rps3) from Lepidium virginicum (Virginia pepperweed).